The following is a 219-amino-acid chain: Glycerol-3-phosphate acyltransferase 2 (219 aa).

Transmembrane regions (helical) follow at residues 1–21, 55–75, 93–113, 135–155, and 160–180; these read MVFWIAGAVGLAIAYLLGSTP, WPALVVLLVDVLKGVGAVVFA, ALDLQSLEPWAVCLTGLAVLL, VLLAMSWPVGLGAAMVFGVAL, and IVSLSSMLAALTAIALVCGLE.

The protein belongs to the PlsY family. In terms of assembly, probably interacts with PlsX.

The protein localises to the cell inner membrane. It catalyses the reaction an acyl phosphate + sn-glycerol 3-phosphate = a 1-acyl-sn-glycero-3-phosphate + phosphate. The protein operates within lipid metabolism; phospholipid metabolism. Functionally, catalyzes the transfer of an acyl group from acyl-phosphate (acyl-PO(4)) to glycerol-3-phosphate (G3P) to form lysophosphatidic acid (LPA). This enzyme utilizes acyl-phosphate as fatty acyl donor, but not acyl-CoA or acyl-ACP. The polypeptide is Glycerol-3-phosphate acyltransferase 2 (Rhizobium johnstonii (strain DSM 114642 / LMG 32736 / 3841) (Rhizobium leguminosarum bv. viciae)).